Consider the following 182-residue polypeptide: Large ribosomal subunit protein uL5 (182 aa).

This sequence belongs to the universal ribosomal protein uL5 family. As to quaternary structure, part of the 50S ribosomal subunit; part of the 5S rRNA/L5/L18/L25 subcomplex. Contacts the 5S rRNA and the P site tRNA. Forms a bridge to the 30S subunit in the 70S ribosome.

This is one of the proteins that bind and probably mediate the attachment of the 5S RNA into the large ribosomal subunit, where it forms part of the central protuberance. In the 70S ribosome it contacts protein S13 of the 30S subunit (bridge B1b), connecting the 2 subunits; this bridge is implicated in subunit movement. Contacts the P site tRNA; the 5S rRNA and some of its associated proteins might help stabilize positioning of ribosome-bound tRNAs. This chain is Large ribosomal subunit protein uL5, found in Borrelia hermsii (strain HS1 / DAH).